We begin with the raw amino-acid sequence, 562 residues long: Putative transport protein ECA2683 (562 aa).

6 consecutive transmembrane segments (helical) span residues 8-28 (LLNG…LCLG), 32-52 (LGPV…LLGQ), 66-86 (FMLF…SIFF), 93-113 (FMLA…LGKL), 116-136 (WGIG…PVLV), and 158-178 (HLSL…IFGA). RCK C-terminal domains lie at 202-288 (LDVD…NFRD) and 290-373 (KEVF…RIGF). The next 5 membrane-spanning stretches (helical) occupy residues 383 to 403 (LLAF…TIQF), 406 to 426 (FTFG…LGFL), 447 to 467 (FGLM…INSS), 478 to 498 (SGLI…AYVL), and 537 to 557 (GTYA…VVIW).

Belongs to the AAE transporter (TC 2.A.81) family. YbjL subfamily.

It is found in the cell membrane. In Pectobacterium atrosepticum (strain SCRI 1043 / ATCC BAA-672) (Erwinia carotovora subsp. atroseptica), this protein is Putative transport protein ECA2683.